Here is a 191-residue protein sequence, read N- to C-terminus: Large ribosomal subunit protein bL12cz (191 aa).

Residues 1 to 58 constitute a chloroplast transit peptide; sequence MASTTLSIATTIRSSSYPTLASINHFPSRTTTIEFPSRFGGGSSSTLTHRATHLRPIA.

Belongs to the bacterial ribosomal protein bL12 family.

Its subcellular location is the plastid. It is found in the chloroplast. This chain is Large ribosomal subunit protein bL12cz (RPL12A), found in Arabidopsis thaliana (Mouse-ear cress).